The sequence spans 348 residues: D-alanine--D-alanine ligase (348 aa).

Positions 132–334 (KRILEVAGVP…YSDLIKELVV (203 aa)) constitute an ATP-grasp domain. Position 162–217 (162–217 (LEKLTFPVFVKPANMGSSVGISKAENESELRSAIDLALKYDSRILIEQGVVAREIE)) interacts with ATP. Mg(2+) contacts are provided by D288, E301, and N303.

The protein belongs to the D-alanine--D-alanine ligase family. Mg(2+) serves as cofactor. Requires Mn(2+) as cofactor.

The protein resides in the cytoplasm. It catalyses the reaction 2 D-alanine + ATP = D-alanyl-D-alanine + ADP + phosphate + H(+). Its pathway is cell wall biogenesis; peptidoglycan biosynthesis. Its function is as follows. Cell wall formation. The protein is D-alanine--D-alanine ligase of Streptococcus thermophilus (strain ATCC BAA-250 / LMG 18311).